The chain runs to 170 residues: Ecotin (170 aa).

Residues 1–21 (MNKASVVFSGLLMAVSASAIA) form the signal peptide. A disulfide bond links Cys-78 and Cys-115.

Belongs to the protease inhibitor I11 (ecotin) family. As to quaternary structure, homodimer.

It localises to the periplasm. Its function is as follows. General inhibitor of pancreatic serine proteases: inhibits chymotrypsin, trypsin, elastases, factor X, kallikrein as well as a variety of other proteases. In Serratia proteamaculans (strain 568), this protein is Ecotin.